The primary structure comprises 383 residues: Probable cell wall hydrolase LytN (383 aa).

An N-terminal signal peptide occupies residues 1-49 (MFVYYCKECFIMNKQQSKVRYSIRKVSIGILSISIGMFLALGMSNKAYA). A LysM domain is found at 175 to 219 (QIYTVKKGDTLSAIALKYKTTVSNIQNTNNIANPNLIFIGQKLKV). A Peptidase C51 domain is found at 241–378 (NSSTLNYLKT…NYENDMIFIR (138 aa)).

Its subcellular location is the secreted. In terms of biological role, probably involved in peptidoglycan hydrolysis. The chain is Probable cell wall hydrolase LytN (lytN) from Staphylococcus aureus (strain NCTC 8325 / PS 47).